Reading from the N-terminus, the 88-residue chain is Protein Aeq5-like1 (88 aa).

A signal peptide spans 1 to 20 (MKSVIAVLVLSLVLVNFTQA). 4 cysteine pairs are disulfide-bonded: Cys29/Cys68, Cys33/Cys64, Cys40/Cys56, and Cys47/Cys53.

Is expressed in the ectodermal cells of gastrulae and planulae. Is also noticeable in the endoderm in late planulae. In the primary polyps, is expressed in both ectoderm (sensory neurons) and endoderm (ganglions). Is not expressed in nematocytes.

Probable neuropeptide. This Nematostella vectensis (Starlet sea anemone) protein is Protein Aeq5-like1.